Consider the following 314-residue polypeptide: tRNA pseudouridine synthase B (314 aa).

His43 contributes to the substrate binding site. The active-site Nucleophile is Asp48. Residues Tyr76, Tyr179, and Leu200 each coordinate substrate.

It belongs to the pseudouridine synthase TruB family. Type 1 subfamily.

It catalyses the reaction uridine(55) in tRNA = pseudouridine(55) in tRNA. Its function is as follows. Responsible for synthesis of pseudouridine from uracil-55 in the psi GC loop of transfer RNAs. This chain is tRNA pseudouridine synthase B, found in Escherichia coli O139:H28 (strain E24377A / ETEC).